Reading from the N-terminus, the 342-residue chain is N-acetyl-gamma-glutamyl-phosphate reductase (342 aa).

Cys156 is an active-site residue.

Belongs to the NAGSA dehydrogenase family. Type 1 subfamily.

It is found in the cytoplasm. The catalysed reaction is N-acetyl-L-glutamate 5-semialdehyde + phosphate + NADP(+) = N-acetyl-L-glutamyl 5-phosphate + NADPH + H(+). It participates in amino-acid biosynthesis; L-arginine biosynthesis; N(2)-acetyl-L-ornithine from L-glutamate: step 3/4. Catalyzes the NADPH-dependent reduction of N-acetyl-5-glutamyl phosphate to yield N-acetyl-L-glutamate 5-semialdehyde. The protein is N-acetyl-gamma-glutamyl-phosphate reductase of Pseudoalteromonas atlantica (strain T6c / ATCC BAA-1087).